The primary structure comprises 357 residues: Anthranilate phosphoribosyltransferase (357 aa).

Residues Gly94, 97-98 (GD), Thr102, 104-107 (NLST), 122-130 (KHGNRAASS), and Gly134 each bind 5-phospho-alpha-D-ribose 1-diphosphate. Gly94 is a binding site for anthranilate. Ser106 contributes to the Mg(2+) binding site. Anthranilate is bound at residue Asn125. Position 180 (Arg180) interacts with anthranilate. Positions 238 and 239 each coordinate Mg(2+).

It belongs to the anthranilate phosphoribosyltransferase family. Homodimer. Mg(2+) is required as a cofactor.

It carries out the reaction N-(5-phospho-beta-D-ribosyl)anthranilate + diphosphate = 5-phospho-alpha-D-ribose 1-diphosphate + anthranilate. It participates in amino-acid biosynthesis; L-tryptophan biosynthesis; L-tryptophan from chorismate: step 2/5. In terms of biological role, catalyzes the transfer of the phosphoribosyl group of 5-phosphorylribose-1-pyrophosphate (PRPP) to anthranilate to yield N-(5'-phosphoribosyl)-anthranilate (PRA). This chain is Anthranilate phosphoribosyltransferase, found in Mycobacterium sp. (strain JLS).